The primary structure comprises 492 residues: Solute carrier family 2, facilitated glucose transporter member 1 (492 aa).

N-acetylmethionine is present on methionine 1. Residues 1-11 (MEPSSKKVTGR) lie on the Cytoplasmic side of the membrane. The helical transmembrane segment at 12 to 33 (LMLAVGGAVLGSLQFGYNTGVI) threads the bilayer. Residues 34–66 (NAPQKVIEEFYNQTWIHRYGERILPTTLTTLWS) are Extracellular-facing. N-linked (GlcNAc...) asparagine glycosylation is present at asparagine 45. Residues 67-87 (LSVAIFSVGGMIGSFSVGLFV) form a helical membrane-spanning segment. Residues 88–90 (NRF) lie on the Cytoplasmic side of the membrane. The chain crosses the membrane as a helical span at residues 91–112 (GRRNSMLMMNLLAFVSAVLMGF). Residues 113–120 (SKLAKSFE) lie on the Extracellular side of the membrane. Residues 121–144 (MLILGRFIIGVYCGLTTGFVPMYV) form a helical membrane-spanning segment. Topologically, residues 145-155 (GEVSPTALRGA) are cytoplasmic. Residues 156 to 176 (LGTLHQLGIVVGILIAQVFGL) traverse the membrane as a helical segment. Glutamine 161 serves as a coordination point for D-glucose. Residues 177-185 (DSIMGNEDL) are Extracellular-facing. The chain crosses the membrane as a helical span at residues 186–206 (WPLLLSVIFVPALLQCIVLPL). Residues 207–271 (CPESPRFLLI…LFRSPAYRQP (65 aa)) are Cytoplasmic-facing. Serine 226 bears the Phosphoserine mark. A helical transmembrane segment spans residues 272–293 (ILSAVVLQLSQQLSGINAVFYY). D-glucose contacts are provided by residues 282-283 (QQ) and asparagine 288. At 294–306 (STSIFEKAGVQQP) the chain is on the extracellular side. Residues 307–328 (VYATIGSGIVNTAFTVVSLFVV) traverse the membrane as a helical segment. Asparagine 317 is a binding site for D-glucose. Topologically, residues 329-334 (ERAGRR) are cytoplasmic. Residues 335-355 (TLHLIGLAGMAACAVLMTIAL) traverse the membrane as a helical segment. The Extracellular portion of the chain corresponds to 356–365 (ALLEQLPWMS). Residues 366-388 (YLSIVAIFGFVAFFEVGPGPIPW) traverse the membrane as a helical segment. Positions 380 and 388 each coordinate D-glucose. Residues 389–401 (FIVAELFSQGPRP) are Cytoplasmic-facing. A helical transmembrane segment spans residues 402 to 422 (AAVAVAGFSNWTSNFIVGMCF). The Extracellular portion of the chain corresponds to 423–429 (QYVEQLC). Residues 430 to 450 (GPYVFIIFTVLLVLFFIFTYF) form a helical membrane-spanning segment. Residues 451-492 (KVPETKGRTFDEIASGFRQGGASQSDKTPEELFHPLGADSQV) lie on the Cytoplasmic side of the membrane. Residue serine 465 is modified to Phosphoserine. The disordered stretch occupies residues 468 to 492 (RQGGASQSDKTPEELFHPLGADSQV). Threonine 478 is subject to Phosphothreonine. The residue at position 490 (serine 490) is a Phosphoserine.

It belongs to the major facilitator superfamily. Sugar transporter (TC 2.A.1.1) family. Glucose transporter subfamily. As to quaternary structure, found in a complex with ADD2, DMTN and SLC2A1. Interacts (via C-terminus cytoplasmic region) with DMTN. Interacts with SNX27; the interaction is required when endocytosed to prevent degradation in lysosomes and promote recycling to the plasma membrane. Interacts with GIPC (via PDZ domain). Interacts with STOM. Interacts with SGTA (via Gln-rich region). Interacts with BSG. Interacts with SMIM43; the interaction may promote SLC2A1-mediated glucose transport to meet the energy needs of mesendoderm differentiation. Phosphorylation at Ser-226 by PKC promotes glucose uptake by increasing cell membrane localization.

The protein resides in the cell membrane. Its subcellular location is the photoreceptor inner segment. The enzyme catalyses D-glucose(out) = D-glucose(in). Its activity is regulated as follows. The uptake of glucose is inhibited by cytochalasin B. Glucose uptake is increased in response to phorbol ester 12-O-tetradecanoylphorbol-13-acetate (TPA) treatment: TPA-induced glucose uptake requires phosphorylation at Ser-226. Functionally, facilitative glucose transporter, which is responsible for constitutive or basal glucose uptake. Has a very broad substrate specificity; can transport a wide range of aldoses including both pentoses and hexoses. Most important energy carrier of the brain: present at the blood-brain barrier and assures the energy-independent, facilitative transport of glucose into the brain. In association with BSG and NXNL1, promotes retinal cone survival by increasing glucose uptake into photoreceptors. Required for mesendoderm differentiation. The chain is Solute carrier family 2, facilitated glucose transporter member 1 from Oryctolagus cuniculus (Rabbit).